Consider the following 197-residue polypeptide: Probable GTP-binding protein EngB (197 aa).

One can recognise an EngB-type G domain in the interval 22 to 195 (ELPEVALAGR…WKAIYALITE (174 aa)). GTP is bound by residues 30-37 (GRSNVGKS), 57-61 (GKTQT), 75-78 (DVPG), 142-145 (TKLD), and 174-176 (FSA). Mg(2+) contacts are provided by S37 and T59.

The protein belongs to the TRAFAC class TrmE-Era-EngA-EngB-Septin-like GTPase superfamily. EngB GTPase family. Mg(2+) serves as cofactor.

Necessary for normal cell division and for the maintenance of normal septation. The protein is Probable GTP-binding protein EngB of Exiguobacterium sp. (strain ATCC BAA-1283 / AT1b).